Reading from the N-terminus, the 327-residue chain is Interleukin-12 subunit beta (327 aa).

An N-terminal signal peptide occupies residues 1 to 22 (MCHQKLTISWFAVVLLASPLMA). In terms of domain architecture, Ig-like C2-type spans 23 to 106 (IWELEKDVYV…LSHSRLLLHK (84 aa)). C50 and C90 are oxidised to a cystine. N125, N135, N223, and N315 each carry an N-linked (GlcNAc...) asparagine glycan. Positions 238–327 (PPKNLQLKPL…WSRWVSVPCS (90 aa)) constitute a Fibronectin type-III domain.

The protein belongs to the IL-12B family. Heterodimer with IL12A; disulfide-linked. The heterodimer is known as interleukin IL-12. Heterodimer with IL23A; disulfide-linked. The heterodimer is known as interleukin IL-23. Also secreted as a monomer. Interacts with NBR1; this interaction promotes IL-12 secretion.

It localises to the secreted. Its function is as follows. Cytokine that can act as a growth factor for activated T and NK cells, enhance the lytic activity of NK/lymphokine-activated killer cells, and stimulate the production of IFN-gamma by resting PBMC. Associates with IL23A to form the IL-23 interleukin, a heterodimeric cytokine which functions in innate and adaptive immunity. IL-23 may constitute with IL-17 an acute response to infection in peripheral tissues. IL-23 binds to a heterodimeric receptor complex composed of IL12RB1 and IL23R, activates the Jak-Stat signaling cascade, stimulates memory rather than naive T-cells and promotes production of pro-inflammatory cytokines. IL-23 induces autoimmune inflammation and thus may be responsible for autoimmune inflammatory diseases and may be important for tumorigenesis. This Mesocricetus auratus (Golden hamster) protein is Interleukin-12 subunit beta (IL12B).